A 222-amino-acid polypeptide reads, in one-letter code: V-type ATP synthase subunit D (222 aa).

The protein belongs to the V-ATPase D subunit family.

Functionally, produces ATP from ADP in the presence of a proton gradient across the membrane. This Acetivibrio thermocellus (strain ATCC 27405 / DSM 1237 / JCM 9322 / NBRC 103400 / NCIMB 10682 / NRRL B-4536 / VPI 7372) (Clostridium thermocellum) protein is V-type ATP synthase subunit D.